The sequence spans 230 residues: 2,3-bisphosphoglycerate-dependent phosphoglycerate mutase (230 aa).

Substrate contacts are provided by residues 8–15 (RHGESEWN), 21–22 (TG), Arg-60, 87–90 (ERHY), Lys-98, 114–115 (RR), and 183–184 (GN). His-9 serves as the catalytic Tele-phosphohistidine intermediate. Glu-87 functions as the Proton donor/acceptor in the catalytic mechanism.

It belongs to the phosphoglycerate mutase family. BPG-dependent PGAM subfamily.

It catalyses the reaction (2R)-2-phosphoglycerate = (2R)-3-phosphoglycerate. It participates in carbohydrate degradation; glycolysis; pyruvate from D-glyceraldehyde 3-phosphate: step 3/5. In terms of biological role, catalyzes the interconversion of 2-phosphoglycerate and 3-phosphoglycerate. The protein is 2,3-bisphosphoglycerate-dependent phosphoglycerate mutase of Streptococcus gordonii (strain Challis / ATCC 35105 / BCRC 15272 / CH1 / DL1 / V288).